The following is a 226-amino-acid chain: Lipoprotein-releasing system ATP-binding protein LolD (226 aa).

Residues 5–225 (LELVEIERHF…TLKEKKIVEL (221 aa)) form the ABC transporter domain. 41 to 48 (APSGAGKS) contacts ATP.

The protein belongs to the ABC transporter superfamily. Lipoprotein translocase (TC 3.A.1.125) family. In terms of assembly, the complex is composed of two ATP-binding proteins (LolD) and two transmembrane proteins (LolC and LolE).

It is found in the cell inner membrane. Functionally, part of the ABC transporter complex LolCDE involved in the translocation of mature outer membrane-directed lipoproteins, from the inner membrane to the periplasmic chaperone, LolA. Responsible for the formation of the LolA-lipoprotein complex in an ATP-dependent manner. The polypeptide is Lipoprotein-releasing system ATP-binding protein LolD (Bartonella quintana (strain Toulouse) (Rochalimaea quintana)).